The following is a 489-amino-acid chain: Inositol-pentakisphosphate 2-kinase (489 aa).

Residues 136 to 140 carry the EXKPK motif motif; sequence EIKPK.

It belongs to the IPK1 type 2 family. As to expression, in brain, it is expressed throughout the hippocampus (CA1, CA2, CA3 and dentate gyrus), inner layers of the cerebral cortex, and Purkinje cells of the cerebellum. In heart, it is expressed in cardiomyocytes but not in interstitial cells, blood vessels, or valves. Also expressed in testis.

The protein resides in the cytoplasm. Its subcellular location is the nucleus. The enzyme catalyses 1D-myo-inositol 1,3,4,5,6-pentakisphosphate + ATP = 1D-myo-inositol hexakisphosphate + ADP + H(+). Phosphorylates Ins(1,3,4,5,6)P5 at position 2 to form Ins(1,2,3,4,5,6)P6 (InsP6 or phytate). InsP6 is involved in many processes such as mRNA export, non-homologous end-joining, endocytosis, ion channel regulation. It also protects cells from TNF-alpha-induced apoptosis. This is Inositol-pentakisphosphate 2-kinase (Ippk) from Mus musculus (Mouse).